The primary structure comprises 114 residues: Probable non-functional T cell receptor beta variable 5-3 (114 aa).

Positions 1–21 are cleaved as a signal peptide; the sequence is MGPGLLCWELLYLLGAGPVEA. The Ig-like domain maps to 22–114; it reads GVTQSPTHLI…SALYLCARSL (93 aa). A disulfide bridge links C42 with C110. Residue N96 is glycosylated (N-linked (GlcNAc...) asparagine).

Alpha-beta TR is a heterodimer composed of an alpha and beta chain; disulfide-linked. The alpha-beta TR is associated with the transmembrane signaling CD3 coreceptor proteins to form the TR-CD3 (TcR or TCR). The assembly of alpha-beta TR heterodimers with CD3 occurs in the endoplasmic reticulum where a single alpha-beta TR heterodimer associates with one CD3D-CD3E heterodimer, one CD3G-CD3E heterodimer and one CD247 homodimer forming a stable octameric structure. CD3D-CD3E and CD3G-CD3E heterodimers preferentially associate with TR alpha and TR beta chains, respectively. The association of the CD247 homodimer is the last step of TcR assembly in the endoplasmic reticulum and is required for transport to the cell surface.

It is found in the cell membrane. Probable non-functional open reading frame (ORF) of V region of the variable domain of T cell receptor (TR) beta chain. Non-functional ORF generally cannot participate in the synthesis of a productive T cell receptor (TR) chain due to altered V-(D)-J or switch recombination and/or splicing site (at mRNA level) and/or conserved amino acid change (protein level). Alpha-beta T cell receptors are antigen specific receptors which are essential to the immune response and are present on the cell surface of T lymphocytes. Recognize peptide-major histocompatibility (MH) (pMH) complexes that are displayed by antigen presenting cells (APC), a prerequisite for efficient T cell adaptive immunity against pathogens. Binding of alpha-beta TR to pMH complex initiates TR-CD3 clustering on the cell surface and intracellular activation of LCK that phosphorylates the ITAM motifs of CD3G, CD3D, CD3E and CD247 enabling the recruitment of ZAP70. In turn ZAP70 phosphorylates LAT, which recruits numerous signaling molecules to form the LAT signalosome. The LAT signalosome propagates signal branching to three major signaling pathways, the calcium, the mitogen-activated protein kinase (MAPK) kinase and the nuclear factor NF-kappa-B (NF-kB) pathways, leading to the mobilization of transcription factors that are critical for gene expression and essential for T cell growth and differentiation. The T cell repertoire is generated in the thymus, by V-(D)-J rearrangement. This repertoire is then shaped by intrathymic selection events to generate a peripheral T cell pool of self-MH restricted, non-autoaggressive T cells. Post-thymic interaction of alpha-beta TR with the pMH complexes shapes TR structural and functional avidity. This chain is Probable non-functional T cell receptor beta variable 5-3, found in Homo sapiens (Human).